Reading from the N-terminus, the 735-residue chain is Translation initiation factor IF-2 (735 aa).

Composition is skewed to basic and acidic residues over residues 52-66 and 101-117; these read VNSE…EKPK and KGKE…EKKL. The tract at residues 52-154 is disordered; that stretch reads VNSEKKAEKK…PAKKEKELPK (103 aa). Basic residues predominate over residues 121 to 133; the sequence is AKKKGKGPMKGKK. Positions 134-145 are enriched in low complexity; that stretch reads QAAPASKQAQQP. The 170-residue stretch at 236–405 folds into the tr-type G domain; it reads ERPPVVTIMG…LLVSEMEELK (170 aa). The tract at residues 245 to 252 is G1; it reads GHVDHGKT. Residue 245–252 coordinates GTP; the sequence is GHVDHGKT. Residues 270-274 are G2; that stretch reads GITQH. Residues 291 to 294 are G3; sequence DTPG. GTP-binding positions include 291–295 and 345–348; these read DTPGH and NKMD. Residues 345–348 are G4; it reads NKMD. The G5 stretch occupies residues 381–383; that stretch reads SAK.

It belongs to the TRAFAC class translation factor GTPase superfamily. Classic translation factor GTPase family. IF-2 subfamily.

The protein localises to the cytoplasm. Functionally, one of the essential components for the initiation of protein synthesis. Protects formylmethionyl-tRNA from spontaneous hydrolysis and promotes its binding to the 30S ribosomal subunits. Also involved in the hydrolysis of GTP during the formation of the 70S ribosomal complex. This is Translation initiation factor IF-2 from Geobacillus thermodenitrificans (strain NG80-2).